Consider the following 160-residue polypeptide: Transcription elongation factor GreA (160 aa).

A coiled-coil region spans residues 3-84 (SIVNDKILLT…SKAKIIKADL (82 aa)).

It belongs to the GreA/GreB family.

Its function is as follows. Necessary for efficient RNA polymerase transcription elongation past template-encoded arresting sites. The arresting sites in DNA have the property of trapping a certain fraction of elongating RNA polymerases that pass through, resulting in locked ternary complexes. Cleavage of the nascent transcript by cleavage factors such as GreA or GreB allows the resumption of elongation from the new 3'terminus. GreA releases sequences of 2 to 3 nucleotides. The chain is Transcription elongation factor GreA from Mesomycoplasma hyopneumoniae (strain 7448) (Mycoplasma hyopneumoniae).